A 129-amino-acid chain; its full sequence is uncharacterized protein (129 aa).

This is an uncharacterized protein from Methanocaldococcus jannaschii (strain ATCC 43067 / DSM 2661 / JAL-1 / JCM 10045 / NBRC 100440) (Methanococcus jannaschii).